An 83-amino-acid polypeptide reads, in one-letter code: Small ribosomal subunit protein bS18 (83 aa).

It belongs to the bacterial ribosomal protein bS18 family. Part of the 30S ribosomal subunit. Forms a tight heterodimer with protein bS6.

Binds as a heterodimer with protein bS6 to the central domain of the 16S rRNA, where it helps stabilize the platform of the 30S subunit. This chain is Small ribosomal subunit protein bS18, found in Methylobacterium sp. (strain 4-46).